Here is a 269-residue protein sequence, read N- to C-terminus: Ribonuclease HII (269 aa).

Positions 83 to 269 (YLIAGVDEVG…HRMSFLTNIL (187 aa)) constitute an RNase H type-2 domain. The a divalent metal cation site is built by D89, E90, and D185.

The protein belongs to the RNase HII family. It depends on Mn(2+) as a cofactor. Requires Mg(2+) as cofactor.

The protein localises to the cytoplasm. The enzyme catalyses Endonucleolytic cleavage to 5'-phosphomonoester.. Its function is as follows. Endonuclease that specifically degrades the RNA of RNA-DNA hybrids. The protein is Ribonuclease HII of Clostridium botulinum (strain Langeland / NCTC 10281 / Type F).